A 65-amino-acid polypeptide reads, in one-letter code: Sec-independent protein translocase protein TatA (65 aa).

A helical membrane pass occupies residues 9-29; that stretch reads ILIIVLLVVVVFGIGKLPQVG. The disordered stretch occupies residues 43-65; that stretch reads SSGEEEKEEVETKEETKTIEKSE. Acidic residues predominate over residues 45–54; it reads GEEEKEEVET. The segment covering 55–65 has biased composition (basic and acidic residues); that stretch reads KEETKTIEKSE.

The protein belongs to the TatA/E family. In terms of assembly, forms a complex with TatC.

Its subcellular location is the cell membrane. In terms of biological role, part of the twin-arginine translocation (Tat) system that transports large folded proteins containing a characteristic twin-arginine motif in their signal peptide across membranes. TatA could form the protein-conducting channel of the Tat system. In Dehalococcoides mccartyi (strain ATCC BAA-2266 / KCTC 15142 / 195) (Dehalococcoides ethenogenes (strain 195)), this protein is Sec-independent protein translocase protein TatA.